The sequence spans 600 residues: MVLILGRRLNREDLGVRDSPATKRKVFEMDPKSLTGHEFFDFSSGSSHAENILQIFNEFRDSRLFTDVIICVEGKEFPCHRAVLSACSSYFRAMFCNDHRESREMLVEINGILAEAMECFLQYVYTGKVKITTENVQYLFETSSLFQISVLRDACAKFLEEQLDPCNCLGIQRFADTHSLKTLFTKCKNFALQTFEDVSQHEEFLELDKDELIDYICSDELVIGKEEMVFEAVMRWVYRAVDLRRPLLHELLTHVRLPLLHPNYFVQTVEVDQLIQNSPECYQLLHEARRYHILGNEMMSPRTRPRRSTGYSEVIVVVGGCERVGGFNLPYTECYDPVTGEWKSLAKLPEFTKSEYAVCALRNDILVSGGRINSRDVWIYNSQLNIWIRVASLNKGRWRHKMAVLLGKVYVVGGYDGQNRLSSVECYDSFSNRWTEVAPLKEAVSSPAVTSCVGKLFVIGGGPDDNTCSDKVQSYDPETNSWLLRAAIPIAKRCITAVSLNNLIYVAGGLTKAIYCYDPVEDYWMHVQNTFSRQENCGMSVCNGKIYILGGRRENGEATDTILCYDPATSIITGVAAMPRPVSYHGCVTIHRYNEKCFKL.

The region spanning 66–133 is the BTB domain; the sequence is TDVIICVEGK…VYTGKVKITT (68 aa). In terms of domain architecture, BACK spans 168-270; that stretch reads CLGIQRFADT…HPNYFVQTVE (103 aa). Kelch repeat units follow at residues 314-363, 365-407, 408-454, 456-502, 504-544, and 546-592; these read VIVV…ALRN, ILVS…VLLG, KVYV…SCVG, LFVI…SLNN, IYVA…VCNG, and IYIL…TIHR.

In terms of assembly, forms homodimers. Interacts with GRIK2. Component of the BCR(KLHL24) E3 ubiquitin ligase complex, composed of CUL3, RBX1 and KLHL24. Interacts with CUL3. Interacts with KRT14. Post-translationally, autoubiquitinated. Autoubiquitination leads to proteasomal degradation and is necessary to control KLHL24 levels. As to expression, expressed in the skin. Found in keratinocytes, dermal fibroblasts, and melanocytes. Basal-layer keratinocytes have lower KLHL24 expression than suprabasal keratinocytes. Expressed in the brain, spinal cord, liver, testis, heart and at higher levels in the skeletal muscle.

The protein localises to the perikaryon. It is found in the cell projection. It localises to the axon. Its subcellular location is the cytoplasm. The protein resides in the cell junction. The protein localises to the desmosome. It is found in the adherens junction. Functionally, necessary to maintain the balance between intermediate filament stability and degradation, a process that is essential for skin integrity. As part of the BCR(KLHL24) E3 ubiquitin ligase complex, mediates ubiquitination of KRT14 and controls its levels during keratinocytes differentiation. Specifically reduces kainate receptor-mediated currents in hippocampal neurons, most probably by modulating channel properties. Has a crucial role in cardiac development and function. This Homo sapiens (Human) protein is Kelch-like protein 24 (KLHL24).